Consider the following 101-residue polypeptide: uncharacterized protein (101 aa).

The N-terminal stretch at 1–21 (MKLSTCCAALLLALASPAVLA) is a signal peptide. Residues 79-94 (RTTSGNVSAPAQSSQD) are compositionally biased toward polar residues. A disordered region spans residues 79–101 (RTTSGNVSAPAQSSQDGAPAEPQ).

This is an uncharacterized protein from Escherichia coli (strain K12).